A 261-amino-acid polypeptide reads, in one-letter code: Nickel import ATP-binding protein NikD (261 aa).

Positions 6 to 248 (LRIEGLTIAT…PRHDATRALV (243 aa)) constitute an ABC transporter domain. Residue 41 to 48 (GASGSGKS) coordinates ATP.

It belongs to the ABC transporter superfamily. Nickel importer (TC 3.A.1.5.3) family. The complex is composed of two ATP-binding proteins (NikD and NikE), two transmembrane proteins (NikB and NikC) and a solute-binding protein (NikA).

The protein resides in the cell inner membrane. The catalysed reaction is Ni(2+)(out) + ATP + H2O = Ni(2+)(in) + ADP + phosphate + H(+). In terms of biological role, part of the ABC transporter complex NikABCDE involved in nickel import. Responsible for energy coupling to the transport system. This Rhodospirillum rubrum (strain ATCC 11170 / ATH 1.1.1 / DSM 467 / LMG 4362 / NCIMB 8255 / S1) protein is Nickel import ATP-binding protein NikD.